A 236-amino-acid chain; its full sequence is LexA repressor (236 aa).

A DNA-binding region (H-T-H motif) is located at residues 26-46 (FDEMKEALDLRSKSGIHRLIT). Active-site for autocatalytic cleavage activity residues include serine 157 and lysine 195.

The protein belongs to the peptidase S24 family. As to quaternary structure, homodimer.

The catalysed reaction is Hydrolysis of Ala-|-Gly bond in repressor LexA.. Its function is as follows. Represses a number of genes involved in the response to DNA damage (SOS response), including recA and lexA. In the presence of single-stranded DNA, RecA interacts with LexA causing an autocatalytic cleavage which disrupts the DNA-binding part of LexA, leading to derepression of the SOS regulon and eventually DNA repair. This Azorhizobium caulinodans (strain ATCC 43989 / DSM 5975 / JCM 20966 / LMG 6465 / NBRC 14845 / NCIMB 13405 / ORS 571) protein is LexA repressor.